A 314-amino-acid polypeptide reads, in one-letter code: A-kinase anchor protein 7 isoform gamma (314 aa).

Residues 1–46 (MPFAAVDIQDDCGSPDVPQANPKRSKEEEEDRGDKNDHVKKRKKAK) form a disordered region. Basic and acidic residues predominate over residues 24–37 (RSKEEEEDRGDKND). AMP-binding positions include threonine 95 and 185-187 (HLT). CMP is bound by residues threonine 95 and 185 to 187 (HLT). Residues 260–314 (AELVRLSKRLVENAVLKAVQQYLEETQNKKQPGEGNSTKAEEGDRNGDGSDNNRK) form a PKA-RII-alpha subunit binding domain region. The segment at 261-285 (ELVRLSKRLVENAVLKAVQQYLEET) is RI-alpha-binding. The RII-binding stretch occupies residues 262 to 275 (LVRLSKRLVENAVL). Residues 281 to 314 (YLEETQNKKQPGEGNSTKAEEGDRNGDGSDNNRK) form a disordered region. Positions 298–314 (KAEEGDRNGDGSDNNRK) are enriched in basic and acidic residues.

As to quaternary structure, binds cAMP-dependent protein kinase (PKA). Interacts with PRKCA; only the cytoplasmic form is capable of interacting with PRKCA. In terms of tissue distribution, expressed in oocytes.

Its subcellular location is the nucleus. The protein resides in the cytoplasm. Its function is as follows. Probably targets cAMP-dependent protein kinase (PKA) to the cellular membrane or cytoskeletal structures. The membrane-associated form reduces epithelial sodium channel (ENaC) activity, whereas the free cytoplasmic form may negatively regulate ENaC channel feedback inhibition by intracellular sodium. In Mus musculus (Mouse), this protein is A-kinase anchor protein 7 isoform gamma.